A 427-amino-acid chain; its full sequence is Adenylosuccinate synthetase (427 aa).

GTP-binding positions include 12-18 and 40-42; these read GDEGKGK and GHT. Aspartate 13 functions as the Proton acceptor in the catalytic mechanism. Residues aspartate 13 and glycine 40 each contribute to the Mg(2+) site. Residues 13–16, 38–41, threonine 127, arginine 141, glutamine 222, threonine 237, and arginine 301 each bind IMP; these read DEGK and NAGH. The active-site Proton donor is histidine 41. 297 to 303 contacts substrate; that stretch reads VVTKRPR. GTP contacts are provided by residues arginine 303, 329-331, and 411-413; these read SLD and AVG.

Belongs to the adenylosuccinate synthetase family. Homodimer. The cofactor is Mg(2+).

It is found in the cytoplasm. It catalyses the reaction IMP + L-aspartate + GTP = N(6)-(1,2-dicarboxyethyl)-AMP + GDP + phosphate + 2 H(+). The protein operates within purine metabolism; AMP biosynthesis via de novo pathway; AMP from IMP: step 1/2. In terms of biological role, plays an important role in the de novo pathway of purine nucleotide biosynthesis. Catalyzes the first committed step in the biosynthesis of AMP from IMP. The sequence is that of Adenylosuccinate synthetase from Leuconostoc mesenteroides subsp. mesenteroides (strain ATCC 8293 / DSM 20343 / BCRC 11652 / CCM 1803 / JCM 6124 / NCDO 523 / NBRC 100496 / NCIMB 8023 / NCTC 12954 / NRRL B-1118 / 37Y).